Here is a 518-residue protein sequence, read N- to C-terminus: Probable cytosol aminopeptidase (518 aa).

Mn(2+)-binding residues include Lys-270 and Asp-275. Lys-282 is a catalytic residue. Mn(2+) is bound by residues Asp-293, Asp-352, and Glu-354. Arg-356 is a catalytic residue. Residues 495–507 (SRTTRQPGSTGET) are compositionally biased toward polar residues. Residues 495–518 (SRTTRQPGSTGETGSRKNRRKSKE) are disordered.

This sequence belongs to the peptidase M17 family. Requires Mn(2+) as cofactor.

It is found in the cytoplasm. It catalyses the reaction Release of an N-terminal amino acid, Xaa-|-Yaa-, in which Xaa is preferably Leu, but may be other amino acids including Pro although not Arg or Lys, and Yaa may be Pro. Amino acid amides and methyl esters are also readily hydrolyzed, but rates on arylamides are exceedingly low.. The enzyme catalyses Release of an N-terminal amino acid, preferentially leucine, but not glutamic or aspartic acids.. Presumably involved in the processing and regular turnover of intracellular proteins. Catalyzes the removal of unsubstituted N-terminal amino acids from various peptides. This chain is Probable cytosol aminopeptidase, found in Nitrosospira multiformis (strain ATCC 25196 / NCIMB 11849 / C 71).